The chain runs to 533 residues: MAPKRKASVQTEGSKKRRQGTEEEDSFRSTAEALRAAPADNRVIRVDPSCPFSRNPGIQVHEDYDCTLNQTNIGNNNNKFYIIQLLEEGSRFFCWNRWGRVGEVGQSKMNHFTCLEDAKKDFKKKFWEKTKNKWEERDRFVAQPNKYTLIEVQGEAESQEAVVKALSPQVYSGPVRTVVKPCSLDPATQNLITNIFSKEMFKNAMTLMNLDVKKMPLGKLTKQQIARGFEALEALEEAMKNPTGDGQSLEELSSCFYTVIPHNFGRSRPPPINSPDVLQAKKDMLLVLADIELAQTLQAAPGEEEEKVEEVPHPLDRDYQLLRCQLQLLDSGESEYKAIQTYLKQTGNSYRCPDLRHVWKVNREGEGDRFQAHSKLGNRRLLWHGTNVAVVAAILTSGLRIMPHSGGRVGKGIYFASENSKSAGYVTTMHCGGHQVGYMFLGEVALGKEHHITIDDPSLKSPPSGFDSVIARGQTEPDPAQDIELELDGQPVVVPQGPPVQCPSFKSSSFSQSEYLIYKESQCRLRYLLEIHL.

Positions 1-30 (MAPKRKASVQTEGSKKRRQGTEEEDSFRST) are disordered. Residue K6 is modified to N6-(ADP-ribosyl)lysine. The residue at position 12 (E12) is an ADP-ribosyl glutamic acid. The short motif at 14 to 18 (SKKRR) is the Nuclear localization signal element. 2 positions are modified to ADP-ribosyl glutamic acid: E24 and E32. The WGR domain occupies 57–147 (GIQVHEDYDC…DRFVAQPNKY (91 aa)). ADP-ribosyl aspartic acid is present on D138. E160, E230, E309, and E310 each carry ADP-ribosyl glutamic acid. The region spanning 181–299 (PCSLDPATQN…DIELAQTLQA (119 aa)) is the PARP alpha-helical domain. The PARP catalytic domain maps to 313-533 (HPLDRDYQLL…RLRYLLEIHL (221 aa)).

The protein belongs to the ARTD/PARP family. Interacts with PARP1; leading to activate PARP1 in absence of DNA. Interacts with PRKDC. Interacts with XRCC5/Ku80; the interaction is dependent on nucleic acids. Interacts with XRCC6/Ku70; the interaction is dependent on nucleic acids. Interacts with EZH2, HDAC1, HDAC2, SUZ12, YY1, LRIG3 and LIG4. Post-translationally, auto-ADP-ribosylated.

It localises to the nucleus. It is found in the chromosome. The protein resides in the cytoplasm. The protein localises to the cytoskeleton. Its subcellular location is the microtubule organizing center. It localises to the centrosome. It is found in the centriole. It carries out the reaction L-aspartyl-[protein] + NAD(+) = 4-O-(ADP-D-ribosyl)-L-aspartyl-[protein] + nicotinamide. The enzyme catalyses L-glutamyl-[protein] + NAD(+) = 5-O-(ADP-D-ribosyl)-L-glutamyl-[protein] + nicotinamide. It catalyses the reaction L-lysyl-[protein] + NAD(+) = N(6)-(ADP-D-ribosyl)-L-lysyl-[protein] + nicotinamide + H(+). Functionally, mono-ADP-ribosyltransferase that mediates mono-ADP-ribosylation of target proteins and plays a key role in the response to DNA damage. Mediates mono-ADP-ribosylation of glutamate, aspartate or lysine residues on target proteins. In contrast to PARP1 and PARP2, it is not able to mediate poly-ADP-ribosylation. Involved in DNA repair by mediating mono-ADP-ribosylation of a limited number of acceptor proteins involved in chromatin architecture and in DNA metabolism, such as histone H2B, XRCC5 and XRCC6. ADP-ribosylation follows DNA damage and appears as an obligatory step in a detection/signaling pathway leading to the reparation of DNA strand breaks. Involved in single-strand break repair by catalyzing mono-ADP-ribosylation of histone H2B on 'Glu-2' (H2BE2ADPr) of nucleosomes containing nicked DNA. Cooperates with the XRCC5-XRCC6 (Ku80-Ku70) heterodimer to limit end-resection thereby promoting accurate NHEJ. Suppresses G-quadruplex (G4) structures in response to DNA damage. Associates with a number of DNA repair factors and is involved in the response to exogenous and endogenous DNA strand breaks. Together with APLF, promotes the retention of the LIG4-XRCC4 complex on chromatin and accelerate DNA ligation during non-homologous end-joining (NHEJ). May link the DNA damage surveillance network to the mitotic fidelity checkpoint. Acts as a negative regulator of immunoglobulin class switch recombination, probably by controlling the level of AICDA /AID on the chromatin. In addition to proteins, also able to ADP-ribosylate DNA: mediates DNA mono-ADP-ribosylation of DNA strand break termini via covalent addition of a single ADP-ribose moiety to a 5'- or 3'-terminal phosphate residues in DNA containing multiple strand breaks. This chain is Protein mono-ADP-ribosyltransferase PARP3, found in Mus musculus (Mouse).